A 198-amino-acid polypeptide reads, in one-letter code: CASP-like protein 1U1 (198 aa).

Residues 1 to 30 are Cytoplasmic-facing; sequence MSDTPVVVIPRKGYVDGHHGYHHSYHSGLN. A helical membrane pass occupies residues 31–51; it reads LLLRLLQAFATAAAVIVMLLA. At 52–73 the chain is on the extracellular side; it reads TQTEFTRYGEVRGRWRDYPAYK. A helical transmembrane segment spans residues 74 to 94; that stretch reads WFIIANAVVFVYALLATLVAC. The Cytoplasmic segment spans residues 95 to 117; that stretch reads CALIARRGPLSYSPSAWLTFLLD. Residues 118 to 138 form a helical membrane-spanning segment; the sequence is FVAASALMSAASAALAVALIA. The Extracellular segment spans residues 139-165; it reads RNGQNLQGQHYWPTFCNYVTRFCDYAQ. The helical transmembrane segment at 166 to 186 threads the bilayer; sequence GAIIASFCGFGLLALSTLLAA. The Cytoplasmic segment spans residues 187-198; it reads SALHHLAWHRLH.

This sequence belongs to the Casparian strip membrane proteins (CASP) family. As to quaternary structure, homodimer and heterodimers.

It localises to the cell membrane. In Physcomitrium patens (Spreading-leaved earth moss), this protein is CASP-like protein 1U1.